The following is a 189-amino-acid chain: Large ribosomal subunit protein eL18 (189 aa).

It belongs to the eukaryotic ribosomal protein eL18 family.

It is found in the cytoplasm. In Drosophila pseudoobscura pseudoobscura (Fruit fly), this protein is Large ribosomal subunit protein eL18 (RpL18).